Consider the following 217-residue polypeptide: Translation initiation factor IF-3 (217 aa).

It belongs to the IF-3 family. As to quaternary structure, monomer.

The protein resides in the cytoplasm. Functionally, IF-3 binds to the 30S ribosomal subunit and shifts the equilibrium between 70S ribosomes and their 50S and 30S subunits in favor of the free subunits, thus enhancing the availability of 30S subunits on which protein synthesis initiation begins. The sequence is that of Translation initiation factor IF-3 from Synechococcus sp. (strain CC9902).